Here is a 101-residue protein sequence, read N- to C-terminus: MVERFSDEARNTALNELPGWSQVAGREAITRTFTFRDFNEAFGFMARVALVAEKTDHHPEWRNVYRTVEVVLATHDAGGVTERDIRLAEAMNAIARQCGGI.

It belongs to the pterin-4-alpha-carbinolamine dehydratase family.

It catalyses the reaction (4aS,6R)-4a-hydroxy-L-erythro-5,6,7,8-tetrahydrobiopterin = (6R)-L-erythro-6,7-dihydrobiopterin + H2O. This Nitrobacter winogradskyi (strain ATCC 25391 / DSM 10237 / CIP 104748 / NCIMB 11846 / Nb-255) protein is Putative pterin-4-alpha-carbinolamine dehydratase.